Reading from the N-terminus, the 203-residue chain is Pyrrolidone-carboxylate peptidase 1 (203 aa).

Catalysis depends on residues E78, C141, and H165.

The protein belongs to the peptidase C15 family. In terms of assembly, homotetramer.

Its subcellular location is the cytoplasm. The catalysed reaction is Release of an N-terminal pyroglutamyl group from a polypeptide, the second amino acid generally not being Pro.. Functionally, removes 5-oxoproline from various penultimate amino acid residues except L-proline. This chain is Pyrrolidone-carboxylate peptidase 1, found in Caldanaerobacter subterraneus subsp. tengcongensis (strain DSM 15242 / JCM 11007 / NBRC 100824 / MB4) (Thermoanaerobacter tengcongensis).